We begin with the raw amino-acid sequence, 1347 residues long: Protocadherin-11 X-linked (1347 aa).

The first 23 residues, 1–23, serve as a signal peptide directing secretion; it reads MDLLSGTYIFAVLLACVVFHSGA. Residues 24–812 are Extracellular-facing; sequence QEKNYTIREE…VSSPTSDYVK (789 aa). Cadherin domains are found at residues 26-139, 140-249, 250-355, 362-466, 467-570, 571-673, and 677-795; these read KNYT…APLF, PATV…HPVF, KETE…VPSI, NPVN…APVF, TQSF…SPVF, THNE…KPVF, and PSNY…APVT. 3 N-linked (GlcNAc...) asparagine glycosylation sites follow: asparagine 27, asparagine 48, and asparagine 54. Asparagine 344 is a glycosylation site (N-linked (GlcNAc...) asparagine). Asparagine 553 carries an N-linked (GlcNAc...) asparagine glycan. Residue asparagine 773 is glycosylated (N-linked (GlcNAc...) asparagine). The chain crosses the membrane as a helical span at residues 813–833; it reads ILVAAVAGTITVVVVIFITAV. The Cytoplasmic segment spans residues 834-1347; it reads VRCRQAPHLK…DSPVMEEHPL (514 aa). Disordered regions lie at residues 1057–1091, 1097–1116, and 1325–1347; these read LPEGSQESSSDGGLGDHDAGSLTSTSHGLPLGYPQ, RATPSNRTEGDGNSDPESTF, and TFTPRQQARPSRGDSPVMEEHPL.

The protein localises to the cell membrane. Its function is as follows. Potential calcium-dependent cell-adhesion protein. This chain is Protocadherin-11 X-linked (PCDH11X), found in Pan troglodytes (Chimpanzee).